Reading from the N-terminus, the 513-residue chain is Protein CYCLOPS (513 aa).

Disordered regions lie at residues 329 to 380 and 395 to 435; these read QGRT…STQN and DDRK…AEAK. The span at 333 to 347 shows a compositional bias: low complexity; that stretch reads ASGEPSQSESSAAAP. Positions 359 to 380 are enriched in polar residues; sequence PSNSNQTLGDSSWKQVGESTQN. Short sequence motifs (nuclear localization signal) lie at residues 397–400 and 421–424; these read RKRK and KKRR. A coiled-coil region spans residues 447-513; sequence MQAILKRCEN…ERILSETGKI (67 aa).

This sequence belongs to the CYCLOPS family. Forms homodimers. Interacts with CCAMK. Highly expressed in roots. Expressed in root hairs and nodules. Not detected in leaves or flowers.

It is found in the nucleus. Involved symbiotic signaling. Required for root infection by symbiotic rhizobia, infection thread (IT) formation, and nodule development. Required for proper induction of early nodulin gene expression. Probably not involved in nodule organogenesis. Involved in arbuscular mycorrhizal (AM) symbiosis. Required for fungal infection of the outer cortical cell layers, and for arbuscule development during the AM symbiosis. Acts downstream of CCAMK. Required for symbiosome formation (i.e. the release of the bacteria from the ITs) and subsequent symbiosome development. Required for the expression of the nodule-specific RPG gene, which controls proper IT growth and is essential for symbiosome formation. Acts upstream of ERN1, a transcriptional regulator required for nodulation. In Medicago truncatula (Barrel medic), this protein is Protein CYCLOPS.